A 512-amino-acid chain; its full sequence is Maturase K (512 aa).

This sequence belongs to the intron maturase 2 family. MatK subfamily.

It is found in the plastid. It localises to the chloroplast. Its function is as follows. Usually encoded in the trnK tRNA gene intron. Probably assists in splicing its own and other chloroplast group II introns. This Oenothera biennis (German evening primrose) protein is Maturase K.